We begin with the raw amino-acid sequence, 341 residues long: Spindle assembly checkpoint protein BUB3 (341 aa).

WD repeat units lie at residues 9 to 48 (APKD…KNVD), 54 to 96 (RYKH…QALT), 97 to 137 (NNEA…DGVI), 144 to 185 (SNNT…DDNG), 191 to 233 (GLKY…YNSS), 249 to 288 (NLAY…KIKN), and 292 to 329 (FNED…IELN).

The protein belongs to the WD repeat BUB3 family. As to quaternary structure, component of the mitotic checkpoint complex (MCC) which consists of MAD2, MAD3, BUB3 and CDC20. Part of complex consisting of MAD1, BUB1 and BUB3 after activation of spindle checkpoint. Part of the BUB1-BUB3 complex, composed of BUB1 and BUB3. Interacts with SPC105 (via phosphorylated MELT motifs); the interaction is direct and occurs when part of the BUB1-BUB3 complex. Interacts with MAD3; the interaction is direct. Post-translationally, phosphorylated by BUB1.

The protein resides in the nucleus. It is found in the chromosome. The protein localises to the centromere. It localises to the kinetochore. Functionally, involved in mitotic spindle assembly checkpoint signaling, a process that delays anaphase until chromosomes are bioriented on the spindle, and in the repair of incorrect mitotic kinetochore-spindle microtubule attachments. Component of the mitotic checkpoint complex (MCC) which inhibits the ubiquitin ligase activity of the anaphase promoting complex/cyclosome (APC/C) by preventing its activation by CDC20. The polypeptide is Spindle assembly checkpoint protein BUB3 (BUB3) (Saccharomyces cerevisiae (strain ATCC 204508 / S288c) (Baker's yeast)).